Here is a 365-residue protein sequence, read N- to C-terminus: MEIKTQLRGLPPYQPGKSIEEVKREYGLTDIIKLASNENPYGCSPAVKEAVMKQLDHLAIYPDGYARLLREKVATHLGVNETQLIFGNGSDEVVQIICRAFLSPNTNTVMAAPTFPQYRHNAVIEGAEIREIPLVDGRHDLEAMLNAIDEQTRVVWICNPNNPTGTYVNEQELTSFLERVPSHVLAVLDEAYYEYATANDYPQTVPLLRQYDNLMILRTFSKAYGLAALRVGYGIASETLIREIEPAREPFNTSSVAQAAAIAALDDQAFIRECVEKNKQGLETFYRFCEENGLRYYPSQANFILIDFGIEGNEVFQYLLERGIIVRSGNALGFPTSVRITVGSKEQNERIIHALTQMLKEKQLI.

At Lys222 the chain carries N6-(pyridoxal phosphate)lysine.

This sequence belongs to the class-II pyridoxal-phosphate-dependent aminotransferase family. Histidinol-phosphate aminotransferase subfamily. Homodimer. The cofactor is pyridoxal 5'-phosphate.

The catalysed reaction is L-histidinol phosphate + 2-oxoglutarate = 3-(imidazol-4-yl)-2-oxopropyl phosphate + L-glutamate. The protein operates within amino-acid biosynthesis; L-histidine biosynthesis; L-histidine from 5-phospho-alpha-D-ribose 1-diphosphate: step 7/9. The sequence is that of Histidinol-phosphate aminotransferase from Geobacillus sp. (strain WCH70).